We begin with the raw amino-acid sequence, 460 residues long: Elongation factor 1-alpha (460 aa).

Glycine 2 is modified (n,N,N-trimethylglycine). Lysine 3 bears the N6,N6-dimethyllysine; alternate mark. Position 3 is an N6-methyllysine; alternate (lysine 3). Residues 6–241 form the tr-type G domain; that stretch reads KQHINIVVIG…DAIEPPVRPT (236 aa). The tract at residues 15-22 is G1; that stretch reads GHVDSGKS. Position 15–22 (15–22) interacts with GTP; that stretch reads GHVDSGKS. Residue lysine 31 is modified to N6-methyllysine. Positions 71–75 are G2; the sequence is GITID. Lysine 80 is modified (N6,N6,N6-trimethyllysine). The G3 stretch occupies residues 92–95; sequence DAPG. Residues 92–96 and 154–157 contribute to the GTP site; these read DAPGH and NKMD. Residues 154–157 are G4; the sequence is NKMD. A G5 region spans residues 193-195; sequence SGF. Lysine 317 carries the post-translational modification N6,N6-dimethyllysine; alternate. Lysine 317 carries the post-translational modification N6-methyllysine; alternate. An N6-methyllysine modification is found at lysine 391.

This sequence belongs to the TRAFAC class translation factor GTPase superfamily. Classic translation factor GTPase family. EF-Tu/EF-1A subfamily.

Its subcellular location is the cytoplasm. This protein promotes the GTP-dependent binding of aminoacyl-tRNA to the A-site of ribosomes during protein biosynthesis. The protein is Elongation factor 1-alpha (tef1) of Aspergillus oryzae (strain ATCC 42149 / RIB 40) (Yellow koji mold).